The sequence spans 346 residues: NADH-ubiquinone oxidoreductase chain 2 (346 aa).

Helical transmembrane passes span 1–21 (MNPHATPVLVLSLALGTTITI), 25–45 (HWVLAWTGLEINTLAIIPLIS), 60–80 (FLTQAAASALVLFSSMTNAWA), 95–115 (CLLLTAAIAIKLGLVPFHFWF), 124–144 (LMTALLLSTLMKFPPLTLLLM), 149–169 (LNPALLTTMALASAALGGWMG), 178–195 (ILAFSSISHLGWIAIILV), 200–219 (LALLTFYLYTIMTSAVFMAL), 242–262 (ATLMLVLLSLAGLPPLTGFMP), 274–294 (EMTPAAMAIAMLSLLSLFFYL), and 326–346 (AILASLSILLLPLSPMIHAIV).

This sequence belongs to the complex I subunit 2 family.

The protein localises to the mitochondrion inner membrane. It catalyses the reaction a ubiquinone + NADH + 5 H(+)(in) = a ubiquinol + NAD(+) + 4 H(+)(out). In terms of biological role, core subunit of the mitochondrial membrane respiratory chain NADH dehydrogenase (Complex I) that is believed to belong to the minimal assembly required for catalysis. Complex I functions in the transfer of electrons from NADH to the respiratory chain. The immediate electron acceptor for the enzyme is believed to be ubiquinone. The protein is NADH-ubiquinone oxidoreductase chain 2 (MT-ND2) of Mareca americana (American wigeon).